A 398-amino-acid polypeptide reads, in one-letter code: Cysteine desulfurase (398 aa).

Pyridoxal 5'-phosphate is bound by residues Gly74–Thr75, Asn155, Gln182, and Cys202–His204. The residue at position 205 (Lys205) is an N6-(pyridoxal phosphate)lysine. A compositionally biased stretch (basic and acidic residues) spans Gly230–Ala244. The segment at Gly230 to Ala253 is disordered. The Cysteine persulfide intermediate role is filled by Cys327. A [2Fe-2S] cluster-binding site is contributed by Cys327.

The protein belongs to the class-V pyridoxal-phosphate-dependent aminotransferase family. NifS/IscS subfamily. As to quaternary structure, homodimer. Pyridoxal 5'-phosphate serves as cofactor.

The catalysed reaction is (sulfur carrier)-H + L-cysteine = (sulfur carrier)-SH + L-alanine. Catalyzes the removal of elemental sulfur atoms from cysteine to produce alanine. Seems to participate in the biosynthesis of the nitrogenase metalloclusters by providing the inorganic sulfur required for the Fe-S core formation. This chain is Cysteine desulfurase, found in Azospirillum brasilense.